The sequence spans 828 residues: Mediator of RNA polymerase II transcription subunit 16 (828 aa).

5 WD repeats span residues 68-107 (GHQE…ANSW), 199-241 (RCRV…VSEK), 264-308 (DKFP…LPLN), 622-663 (NQGS…CLPV), and 777-816 (FPTE…TCLC).

This sequence belongs to the Mediator complex subunit 16 family. Component of the Mediator complex.

It localises to the nucleus. Its function is as follows. Component of the Mediator complex, a coactivator involved in the regulated transcription of nearly all RNA polymerase II-dependent genes. Mediator functions as a bridge to convey information from gene-specific regulatory proteins to the basal RNA polymerase II transcription machinery. Mediator is recruited to promoters by direct interactions with regulatory proteins and serves as a scaffold for the assembly of a functional preinitiation complex with RNA polymerase II and the general transcription factors. In Xenopus tropicalis (Western clawed frog), this protein is Mediator of RNA polymerase II transcription subunit 16 (med16).